A 731-amino-acid chain; its full sequence is 1,4-alpha-glucan branching enzyme GlgB (731 aa).

D411 functions as the Nucleophile in the catalytic mechanism. E464 (proton donor) is an active-site residue.

Belongs to the glycosyl hydrolase 13 family. GlgB subfamily. In terms of assembly, monomer.

The enzyme catalyses Transfers a segment of a (1-&gt;4)-alpha-D-glucan chain to a primary hydroxy group in a similar glucan chain.. It functions in the pathway glycan biosynthesis; glycogen biosynthesis. In terms of biological role, catalyzes the formation of the alpha-1,6-glucosidic linkages in glycogen by scission of a 1,4-alpha-linked oligosaccharide from growing alpha-1,4-glucan chains and the subsequent attachment of the oligosaccharide to the alpha-1,6 position. The chain is 1,4-alpha-glucan branching enzyme GlgB from Mycobacterium bovis (strain ATCC BAA-935 / AF2122/97).